Reading from the N-terminus, the 158-residue chain is 2-C-methyl-D-erythritol 2,4-cyclodiphosphate synthase (158 aa).

2 residues coordinate a divalent metal cation: Asp9 and His11. Residues 9 to 11 (DVH) and 35 to 36 (HS) contribute to the 4-CDP-2-C-methyl-D-erythritol 2-phosphate site. Residue His43 coordinates a divalent metal cation. 4-CDP-2-C-methyl-D-erythritol 2-phosphate-binding positions include 57–59 (DIG), 62–66 (FPDTD), 101–107 (AQKPKMA), 133–136 (TTTE), Phe140, and Arg143.

The protein belongs to the IspF family. As to quaternary structure, homotrimer. A divalent metal cation serves as cofactor.

The catalysed reaction is 4-CDP-2-C-methyl-D-erythritol 2-phosphate = 2-C-methyl-D-erythritol 2,4-cyclic diphosphate + CMP. It functions in the pathway isoprenoid biosynthesis; isopentenyl diphosphate biosynthesis via DXP pathway; isopentenyl diphosphate from 1-deoxy-D-xylulose 5-phosphate: step 4/6. Involved in the biosynthesis of isopentenyl diphosphate (IPP) and dimethylallyl diphosphate (DMAPP), two major building blocks of isoprenoid compounds. Catalyzes the conversion of 4-diphosphocytidyl-2-C-methyl-D-erythritol 2-phosphate (CDP-ME2P) to 2-C-methyl-D-erythritol 2,4-cyclodiphosphate (ME-CPP) with a corresponding release of cytidine 5-monophosphate (CMP). The sequence is that of 2-C-methyl-D-erythritol 2,4-cyclodiphosphate synthase from Bacillus cereus (strain ATCC 10987 / NRS 248).